The chain runs to 376 residues: Putative aryl-alcohol dehydrogenase AAD14 (376 aa).

The Proton donor role is filled by Tyr76. His151 lines the substrate pocket. 236–246 contributes to the NADP(+) binding site; sequence DVMGGGRFQSK.

It belongs to the aldo/keto reductase family. Aldo/keto reductase 2 subfamily.

This is Putative aryl-alcohol dehydrogenase AAD14 (AAD14) from Saccharomyces cerevisiae (strain ATCC 204508 / S288c) (Baker's yeast).